A 140-amino-acid polypeptide reads, in one-letter code: MTEYQASERRGCRIMGISRSLLHYCPNTARDIPVVEVLQKLAHQYPAYGFGLMFNKLRQSGLPWNVKRVYRVYRLLKLNFRRKGKKRLPNRHPQPLAIPLKMNHCWSVDFMSDALTDGRRFRLFNVVEILTGKHWQLKLT.

The chain is Low calcium response locus protein T (lcrT) from Yersinia pestis.